The following is a 278-amino-acid chain: S-formylglutathione hydrolase YeiG (278 aa).

Catalysis depends on charge relay system residues serine 145, aspartate 223, and histidine 256.

Belongs to the esterase D family.

It catalyses the reaction S-formylglutathione + H2O = formate + glutathione + H(+). Functionally, serine hydrolase involved in the detoxification of formaldehyde. Hydrolyzes S-formylglutathione to glutathione and formate. In Shigella dysenteriae serotype 1 (strain Sd197), this protein is S-formylglutathione hydrolase YeiG (yeiG).